The primary structure comprises 560 residues: Alpha-farnesene synthase (560 aa).

Asp308, Asp312, and Glu462 together coordinate Mg(2+). Residues 308 to 312 (DDIYD) carry the DDXXD motif motif.

Belongs to the terpene synthase family. Tpsa subfamily. The cofactor is Mg(2+). In terms of tissue distribution, expressed in the rind tissues of ripe fruits.

It localises to the cytoplasm. The enzyme catalyses (2E,6E)-farnesyl diphosphate = (3E,6E)-alpha-farnesene + diphosphate. It functions in the pathway secondary metabolite biosynthesis; terpenoid biosynthesis. Functionally, sesquiterpene synthase producing exclusively alpha-farnesene. Associated with the production of sesquiterpenes responsible for the aroma of the fruit. This chain is Alpha-farnesene synthase, found in Cucumis melo (Muskmelon).